Reading from the N-terminus, the 240-residue chain is Orotidine 5'-phosphate decarboxylase (240 aa).

Substrate is bound by residues Asp-10, Lys-33, 60–69 (DLKLHDIPNT), Thr-123, Arg-185, Gln-194, Gly-214, and Arg-215. Lys-62 serves as the catalytic Proton donor.

Belongs to the OMP decarboxylase family. Type 1 subfamily. Homodimer.

It carries out the reaction orotidine 5'-phosphate + H(+) = UMP + CO2. Its pathway is pyrimidine metabolism; UMP biosynthesis via de novo pathway; UMP from orotate: step 2/2. Its function is as follows. Catalyzes the decarboxylation of orotidine 5'-monophosphate (OMP) to uridine 5'-monophosphate (UMP). In Lactobacillus delbrueckii subsp. bulgaricus (strain ATCC 11842 / DSM 20081 / BCRC 10696 / JCM 1002 / NBRC 13953 / NCIMB 11778 / NCTC 12712 / WDCM 00102 / Lb 14), this protein is Orotidine 5'-phosphate decarboxylase.